Reading from the N-terminus, the 446-residue chain is Tubulin beta-4 chain (446 aa).

Residues glutamine 11, glutamate 69, serine 138, glycine 142, threonine 143, glycine 144, asparagine 204, and asparagine 226 each coordinate GTP. Glutamate 69 contributes to the Mg(2+) binding site. Over residues 417–426 (DLVSEYQQYQ) the composition is skewed to polar residues. Residues 417-446 (DLVSEYQQYQDATADEEGDYEDEDEALHDE) are disordered. A compositionally biased stretch (acidic residues) spans 429 to 446 (TADEEGDYEDEDEALHDE).

The protein belongs to the tubulin family. Dimer of alpha and beta chains. A typical microtubule is a hollow water-filled tube with an outer diameter of 25 nm and an inner diameter of 15 nM. Alpha-beta heterodimers associate head-to-tail to form protofilaments running lengthwise along the microtubule wall with the beta-tubulin subunit facing the microtubule plus end conferring a structural polarity. Microtubules usually have 13 protofilaments but different protofilament numbers can be found in some organisms and specialized cells. Mg(2+) is required as a cofactor.

The protein localises to the cytoplasm. It localises to the cytoskeleton. Its function is as follows. Tubulin is the major constituent of microtubules, a cylinder consisting of laterally associated linear protofilaments composed of alpha- and beta-tubulin heterodimers. Microtubules grow by the addition of GTP-tubulin dimers to the microtubule end, where a stabilizing cap forms. Below the cap, tubulin dimers are in GDP-bound state, owing to GTPase activity of alpha-tubulin. The chain is Tubulin beta-4 chain (TUBB4) from Eleusine indica (Goosegrass).